The primary structure comprises 252 residues: Adenosylcobinamide-GDP ribazoletransferase (252 aa).

7 consecutive transmembrane segments (helical) span residues 35-55 (AMLP…FYIL), 58-78 (IFPA…LIGG), 113-133 (FAVL…SFII), 139-159 (YAII…FLIG), 170-190 (LFIE…MIVP), 192-212 (VLLI…IITL), and 231-251 (GANN…LLYI).

This sequence belongs to the CobS family. Requires Mg(2+) as cofactor.

The protein localises to the cell membrane. The enzyme catalyses alpha-ribazole + adenosylcob(III)inamide-GDP = adenosylcob(III)alamin + GMP + H(+). It catalyses the reaction alpha-ribazole 5'-phosphate + adenosylcob(III)inamide-GDP = adenosylcob(III)alamin 5'-phosphate + GMP + H(+). The protein operates within cofactor biosynthesis; adenosylcobalamin biosynthesis; adenosylcobalamin from cob(II)yrinate a,c-diamide: step 7/7. Joins adenosylcobinamide-GDP and alpha-ribazole to generate adenosylcobalamin (Ado-cobalamin). Also synthesizes adenosylcobalamin 5'-phosphate from adenosylcobinamide-GDP and alpha-ribazole 5'-phosphate. The chain is Adenosylcobinamide-GDP ribazoletransferase from Clostridium tetani (strain Massachusetts / E88).